A 366-amino-acid polypeptide reads, in one-letter code: tRNA/tmRNA (uracil-C(5))-methyltransferase (366 aa).

Glutamine 189, tyrosine 217, asparagine 222, glutamate 238, and aspartate 298 together coordinate S-adenosyl-L-methionine. The Nucleophile role is filled by cysteine 323. Glutamate 357 functions as the Proton acceptor in the catalytic mechanism.

Belongs to the class I-like SAM-binding methyltransferase superfamily. RNA M5U methyltransferase family. TrmA subfamily.

The enzyme catalyses uridine(54) in tRNA + S-adenosyl-L-methionine = 5-methyluridine(54) in tRNA + S-adenosyl-L-homocysteine + H(+). It carries out the reaction uridine(341) in tmRNA + S-adenosyl-L-methionine = 5-methyluridine(341) in tmRNA + S-adenosyl-L-homocysteine + H(+). Functionally, dual-specificity methyltransferase that catalyzes the formation of 5-methyluridine at position 54 (m5U54) in all tRNAs, and that of position 341 (m5U341) in tmRNA (transfer-mRNA). The protein is tRNA/tmRNA (uracil-C(5))-methyltransferase of Photorhabdus laumondii subsp. laumondii (strain DSM 15139 / CIP 105565 / TT01) (Photorhabdus luminescens subsp. laumondii).